We begin with the raw amino-acid sequence, 395 residues long: L-methionine gamma-lyase (395 aa).

Pyridoxal 5'-phosphate-binding positions include 56–58 (YTR) and 86–87 (GM). Tyr-111 is a binding site for substrate. 206-208 (SVT) serves as a coordination point for pyridoxal 5'-phosphate. At Lys-209 the chain carries N6-(pyridoxal phosphate)lysine. Arg-373 contributes to the substrate binding site.

Belongs to the trans-sulfuration enzymes family. L-methionine gamma-lyase subfamily. Homotetramer. Pyridoxal 5'-phosphate is required as a cofactor.

The enzyme catalyses L-methionine + H2O = methanethiol + 2-oxobutanoate + NH4(+). It carries out the reaction L-homocysteine + H2O = 2-oxobutanoate + hydrogen sulfide + NH4(+) + H(+). Catalyzes the alpha,gamma-elimination of L-methionine to produce methanethiol, 2-oxobutanoate and ammonia; methanethiol (methyl mercaptan) is considered to be one of the main causes of the oral malodor associated with periodontitis. Also displays homocysteine desulfhydrase activity, degrading homocysteine to produce hydrogen sulfide, 2-oxobutanoate and ammonia. L-cysteine and S-methyl-L-cysteine are poor substrates for the enzyme. Functionally, plays an important role in the resistance of F.nucleatum to the antibacterial agent 3-chloro-DL-alanine (3CA), thanks to its 3CA chloride-lyase (deaminating) activity. This is L-methionine gamma-lyase from Fusobacterium nucleatum subsp. polymorphum (Fusobacterium polymorphum).